The chain runs to 278 residues: HTH-type transcriptional activator RhaS (278 aa).

In terms of domain architecture, HTH araC/xylS-type spans 174–272 (NLLLAWLEDH…NWSPRDIRQG (99 aa)). DNA-binding regions (H-T-H motif) lie at residues 191–212 (DAVA…KQQT) and 239–262 (VTDI…RREF).

In terms of assembly, binds DNA as a dimer.

The protein resides in the cytoplasm. In terms of biological role, activates expression of the rhaBAD and rhaT operons. The chain is HTH-type transcriptional activator RhaS from Escherichia coli O139:H28 (strain E24377A / ETEC).